The sequence spans 172 residues: Scytalone dehydratase-like protein Arp1 (172 aa).

A substrate-binding site is contributed by tyrosine 49. Residues histidine 84 and histidine 109 contribute to the active site. Asparagine 130 lines the substrate pocket.

Belongs to the scytalone dehydratase family. In terms of assembly, homotrimer. Each subunit contains an active site, located in the central part of the hydrophobic core of the monomer, which functions independently.

Its function is as follows. Scytalone dehydratase-like protein; part of the Pks2 gene cluster that mediates the formation of infectious structures (appressoria), enabling these fungi to kill insects faster. The product of the Pks2 gene cluster is different from the one of Pks1 and has still not been identified. The protein is Scytalone dehydratase-like protein Arp1 of Metarhizium robertsii (strain ARSEF 23 / ATCC MYA-3075) (Metarhizium anisopliae (strain ARSEF 23)).